Here is an 868-residue protein sequence, read N- to C-terminus: MLQAYRRHVADRQKLGIPPLPLNAQQTTELCELLKNPPEAEKEELMMLLRDRVPPGVDEAAYVKAGFLTAIAKGEVTCPLISGQGAVDLLGTMIGGYNVQSLIELLKSKDTNIASAAATALSKTLLVFDAFNDVLHLSDTNGYAKQVIDAWAEGAWFINKPEVPERITVTVFKVPGETNTDDLSPAPHATTRPDIPLHALAMLEAKMPEGLGTIAELKQKGHPVAYVGDVVGTGSSRKSAINSVLWHIGTDIPFVPNKRAGGYILGGKIAPIFFNTAEDSGALPIECDVNQLNTGDVITIYPREGKITNKAGETITTFQLKPETILDEVRAGGRIPLLIGRALTDKTREALGLSPSPLFVRPTAPADTGKGFTLAQKMVGKACGVQGIRPGTSCEPIMTTVGSQDTTGPMTRDELKELACLGFNADLTLQTFCHTAAYPKPVDIKTHKDLPDFFSTRGGVALRPGDGIIHSWLNRMLLPDTVGTGGDSHTRFPLGISFPAGSGLVAFAAALGVMPLDMPESVLVKFTGELQPGVTLRDIVNAIPWVAMQQGKLTVGKGDKVNVFNGRIMEMEGLPDLKVEQAFELTDATAERSCSGSTIKLSEETVAEYLRSNVVLMKNMIARGYQDARTLLRRIAKMEEWLANPSLMSGDADAEYADVIEVNLDEIKEPIVAAPNDPDNVKLMSECAGDVIHEVFIGSCMTNIGHYRAAAKILEGAGTVKGRLWICPPTRMDEQQLREEGIYGIFAAAGARTEMPGCSLCMGNQARVEDGVTVFSTSTRNFNNRMGKGAQVYLGSAELAAVCALLGKIPTVEEYLAIVSEKVAPFEGELYRYLNFNEIDNFEDFGRVIPLDQMPKIEDILGMPVGAK.

Substrate contacts are provided by residues R192, 235–237 (SSR), 404–406 (QDT), and S488. C700, C758, and C761 together coordinate [4Fe-4S] cluster. The substrate site is built by R780 and R785.

The protein belongs to the aconitase/IPM isomerase family. As to quaternary structure, monomer. The cofactor is [4Fe-4S] cluster.

The enzyme catalyses citrate = D-threo-isocitrate. It catalyses the reaction (2S,3R)-3-hydroxybutane-1,2,3-tricarboxylate = 2-methyl-cis-aconitate + H2O. The protein operates within carbohydrate metabolism; tricarboxylic acid cycle; isocitrate from oxaloacetate: step 2/2. Its pathway is organic acid metabolism; propanoate degradation. Its function is as follows. Involved in the catabolism of short chain fatty acids (SCFA) via the tricarboxylic acid (TCA)(acetyl degradation route) and probably via the 2-methylcitrate cycle I (propionate degradation route). Catalyzes the reversible isomerization of citrate to isocitrate via cis-aconitate. Catalyzes the hydration of 2-methyl-cis-aconitate to yield (2R,3S)-2-methylisocitrate. The apo form of AcnB functions as a RNA-binding regulatory protein. This is Aconitate hydratase B (acnB) from Synechocystis sp. (strain ATCC 27184 / PCC 6803 / Kazusa).